The chain runs to 280 residues: MRKWLIFLLIAAVAGLSACSTSGNTTVSDDLVLVEGGAFKTSKSSYSDKNVTLSDFYIGKYEVTQKQWMDVMGDNPSGFKGEERPVERVTWYDAIEYCNARSIKENLKPYYTIDKETTDPDNKNENDNIKWTVTINEGANGYRLPTGAEWEYAASGGQKSQNFTYSGSNNPDEVAWYWMNAGEKPLTGDWNWPAIENNRNQTKPVGQQKANELGIYDMSGNVREWCWEWHSHPETPENTWRISKGGGWVSSVNTAEISYPGKFDANGLGPDQGLRVVRSK.

The N-terminal stretch at 1-18 (MRKWLIFLLIAAVAGLSA) is a signal peptide. Cys-19 carries N-palmitoyl cysteine lipidation. Cys-19 is lipidated: S-diacylglycerol cysteine.

It localises to the cell membrane. In terms of biological role, is required for the expression of the adjacently encoded xylanase Xyn11E in an active form. LppX seems to act as a specific chaperone necessary for the correct folding of the xylanase during secretion across the cytoplasmic membrane. This is Chaperone protein LppX from Paenibacillus barcinonensis.